The chain runs to 242 residues: Proteasome subunit beta type-4 (242 aa).

A propeptide spanning residues 1–23 (ESVARGTAPGELHCFPGAGPVRH) is cleaved from the precursor. Residue Thr-24 is the Nucleophile of the active site.

The protein belongs to the peptidase T1B family. In terms of assembly, the 26S proteasome consists of a 20S proteasome core and two 19S regulatory subunits. The 20S proteasome core is composed of 28 subunits that are arranged in four stacked rings, resulting in a barrel-shaped structure. The two end rings are each formed by seven alpha subunits, and the two central rings are each formed by seven beta subunits. The catalytic chamber with the active sites is on the inside of the barrel.

It is found in the cytoplasm. The protein localises to the nucleus. Non-catalytic component of the proteasome, a multicatalytic proteinase complex which is characterized by its ability to cleave peptides with Arg, Phe, Tyr, Leu, and Glu adjacent to the leaving group at neutral or slightly basic pH. The proteasome has an ATP-dependent proteolytic activity. The protein is Proteasome subunit beta type-4 (psmb4) of Xenopus laevis (African clawed frog).